The following is a 191-amino-acid chain: Protein NUCLEAR FUSION DEFECTIVE 2 (191 aa).

A signal peptide spans 1–29; that stretch reads MATLRFTLLLLVFVVGIFFSFSSVSHVRA. Residues 48–167 form the RNase III domain; the sequence is LAKLQTQIGY…IFGAIAIDAG (120 aa).

Its function is as follows. Required for karyogamy during female gametophyte development, when the two polar nuclei fuse to form the diploid central cell nucleus. The polypeptide is Protein NUCLEAR FUSION DEFECTIVE 2 (Arabidopsis thaliana (Mouse-ear cress)).